The primary structure comprises 426 residues: Histidine--tRNA ligase (426 aa).

It belongs to the class-II aminoacyl-tRNA synthetase family. In terms of assembly, homodimer.

The protein localises to the cytoplasm. It carries out the reaction tRNA(His) + L-histidine + ATP = L-histidyl-tRNA(His) + AMP + diphosphate + H(+). In Streptococcus sanguinis (strain SK36), this protein is Histidine--tRNA ligase.